We begin with the raw amino-acid sequence, 964 residues long: Integrator complex subunit 7 (964 aa).

A compositionally biased stretch (low complexity) spans 937 to 958; it reads QQLRHQLQQQQQNVPQPAAQRN. The interval 937–964 is disordered; it reads QQLRHQLQQQQQNVPQPAAQRNISTRFQ.

The protein belongs to the Integrator subunit 7 family. As to quaternary structure, component of the Integrator complex, composed of core subunits INTS1, INTS2, INTS3, INTS4, INTS5, INTS6, INTS7, INTS8, INTS9/RC74, INTS10, INTS11/CPSF3L, INTS12, INTS13, INTS14 and INTS15. The core complex associates with protein phosphatase 2A subunits PPP2CA and PPP2R1A, to form the Integrator-PP2A (INTAC) complex.

The protein localises to the nucleus. The protein resides in the chromosome. It localises to the cytoplasm. Component of the integrator complex, a multiprotein complex that terminates RNA polymerase II (Pol II) transcription in the promoter-proximal region of genes. The integrator complex provides a quality checkpoint during transcription elongation by driving premature transcription termination of transcripts that are unfavorably configured for transcriptional elongation: the complex terminates transcription by (1) catalyzing dephosphorylation of the C-terminal domain (CTD) of Pol II subunit POLR2A/RPB1 and SUPT5H/SPT5, (2) degrading the exiting nascent RNA transcript via endonuclease activity and (3) promoting the release of Pol II from bound DNA. The integrator complex is also involved in terminating the synthesis of non-coding Pol II transcripts, such as enhancer RNAs (eRNAs), small nuclear RNAs (snRNAs), telomerase RNAs and long non-coding RNAs (lncRNAs). Essential during embryogenesis for eye development. The sequence is that of Integrator complex subunit 7 (ints7) from Danio rerio (Zebrafish).